A 218-amino-acid chain; its full sequence is uncharacterized protein (218 aa).

This is an uncharacterized protein from Mycoplasma pneumoniae (strain ATCC 29342 / M129 / Subtype 1) (Mycoplasmoides pneumoniae).